An 835-amino-acid polypeptide reads, in one-letter code: Ribonucleoside-diphosphate reductase large subunit (835 aa).

The interval 1–39 (MPPRAPRPAGAVSPPFPPLAGPPLKARAPRARDSPLTSP) is disordered. Substrate is bound by residues T262, 277–278 (SC), G308, 489–493 (NLCTE), and 666–670 (PTVSS). C278 and C506 are disulfide-bonded. N489 serves as the catalytic Proton acceptor. Catalysis depends on C491, which acts as the Cysteine radical intermediate. E493 (proton acceptor) is an active-site residue.

It belongs to the ribonucleoside diphosphate reductase large chain family. In terms of assembly, heterotetramer composed of a homodimer of the large subunit (R1) and a homodimer of the small subunit (R2). Larger multisubunit protein complex are also active, composed of (R1)n(R2)n.

It carries out the reaction a 2'-deoxyribonucleoside 5'-diphosphate + [thioredoxin]-disulfide + H2O = a ribonucleoside 5'-diphosphate + [thioredoxin]-dithiol. Its function is as follows. Ribonucleoside-diphosphate reductase holoenzyme provides the precursors necessary for viral DNA synthesis. Allows virus growth in non-dividing cells, as well as reactivation from latency in infected hosts. Catalyzes the biosynthesis of deoxyribonucleotides from the corresponding ribonucleotides. The sequence is that of Ribonucleoside-diphosphate reductase large subunit from Suid herpesvirus 1 (strain Kaplan) (SuHV-1).